Here is a 308-residue protein sequence, read N- to C-terminus: MFMQKIIVLIGPTGIGKTELALKLAPKINAEIISGDSMQIYQEVSIGTAKPTAEELRQVKHYLVNQRSIFDEYSVKDFVAEGKKAVNQIAAKGSIPLVVGGTGFYINALVNKLQLGEPGDYQTSVDSKWEKYLKDNGAEKLWQLLDEKDPVAAKKIAPQNSRRTLRALTVISRTGKLFSQQQAQISPRYDALIIGLNSNREEVYQRINKRVDKMMNAGLLKEAKFVYDNRAREHQAIQAIGYKEFFPYFSGEKTLDECVNKLKQASRKYAKRQLTYFKHQLSVVWLDPLQDKEVSERALNEIKSFLNK.

G11–T18 contacts ATP. Substrate is bound at residue T13–T18. An interaction with substrate tRNA region spans residues D36–Q39.

Belongs to the IPP transferase family. Monomer. It depends on Mg(2+) as a cofactor.

It catalyses the reaction adenosine(37) in tRNA + dimethylallyl diphosphate = N(6)-dimethylallyladenosine(37) in tRNA + diphosphate. In terms of biological role, catalyzes the transfer of a dimethylallyl group onto the adenine at position 37 in tRNAs that read codons beginning with uridine, leading to the formation of N6-(dimethylallyl)adenosine (i(6)A). In Lactobacillus gasseri (strain ATCC 33323 / DSM 20243 / BCRC 14619 / CIP 102991 / JCM 1131 / KCTC 3163 / NCIMB 11718 / NCTC 13722 / AM63), this protein is tRNA dimethylallyltransferase.